The following is a 652-amino-acid chain: DNA ligase (652 aa).

NAD(+)-binding positions include 29-33 (DSDYD), 78-79 (SL), and Glu107. Catalysis depends on Lys109, which acts as the N6-AMP-lysine intermediate. NAD(+) is bound by residues Arg130, Glu164, Lys278, and Lys302. Cys395, Cys398, Cys413, and Cys418 together coordinate Zn(2+). Residues 577 to 652 (NSDAALFGLT…IEDEDWLRKF (76 aa)) enclose the BRCT domain.

Belongs to the NAD-dependent DNA ligase family. LigA subfamily. Mg(2+) serves as cofactor. Requires Mn(2+) as cofactor.

The catalysed reaction is NAD(+) + (deoxyribonucleotide)n-3'-hydroxyl + 5'-phospho-(deoxyribonucleotide)m = (deoxyribonucleotide)n+m + AMP + beta-nicotinamide D-nucleotide.. Its function is as follows. DNA ligase that catalyzes the formation of phosphodiester linkages between 5'-phosphoryl and 3'-hydroxyl groups in double-stranded DNA using NAD as a coenzyme and as the energy source for the reaction. It is essential for DNA replication and repair of damaged DNA. This is DNA ligase from Streptococcus pyogenes serotype M6 (strain ATCC BAA-946 / MGAS10394).